A 955-amino-acid polypeptide reads, in one-letter code: Protein translocase subunit SecA (955 aa).

Residues Gln-87, 105–109, and Asp-494 each bind ATP; that span reads GEGKT. The segment at 861–955 is disordered; the sequence is AAPAPAAPRP…KKAPRTKRKR (95 aa). A compositionally biased stretch (low complexity) spans 874-888; that stretch reads QEAAQQAQGTAAPSA. Positions 943 to 955 are enriched in basic residues; the sequence is SKGKKAPRTKRKR.

Belongs to the SecA family. Monomer and homodimer. Part of the essential Sec protein translocation apparatus which comprises SecA, SecYEG and auxiliary proteins SecDF. Other proteins may also be involved.

It localises to the cell membrane. It is found in the cytoplasm. The catalysed reaction is ATP + H2O + cellular proteinSide 1 = ADP + phosphate + cellular proteinSide 2.. In terms of biological role, part of the Sec protein translocase complex. Interacts with the SecYEG preprotein conducting channel. Has a central role in coupling the hydrolysis of ATP to the transfer of proteins into and across the cell membrane, serving as an ATP-driven molecular motor driving the stepwise translocation of polypeptide chains across the membrane. The chain is Protein translocase subunit SecA from Rhodococcus opacus (strain B4).